Here is a 100-residue protein sequence, read N- to C-terminus: Large ribosomal subunit protein uL23 (100 aa).

It belongs to the universal ribosomal protein uL23 family. Part of the 50S ribosomal subunit. Contacts protein L29, and trigger factor when it is bound to the ribosome.

Its function is as follows. One of the early assembly proteins it binds 23S rRNA. One of the proteins that surrounds the polypeptide exit tunnel on the outside of the ribosome. Forms the main docking site for trigger factor binding to the ribosome. The polypeptide is Large ribosomal subunit protein uL23 (Mycolicibacterium vanbaalenii (strain DSM 7251 / JCM 13017 / BCRC 16820 / KCTC 9966 / NRRL B-24157 / PYR-1) (Mycobacterium vanbaalenii)).